The primary structure comprises 204 residues: Peptidyl-tRNA hydrolase 2 (204 aa).

Tyrosine 37 is a tRNA binding site. Residue histidine 42 is the Proton acceptor of the active site. Residues phenylalanine 86, asparagine 88, and asparagine 134 each contribute to the tRNA site.

The protein belongs to the PTH family. Monomer.

The protein resides in the cytoplasm. It catalyses the reaction an N-acyl-L-alpha-aminoacyl-tRNA + H2O = an N-acyl-L-amino acid + a tRNA + H(+). In terms of biological role, hydrolyzes ribosome-free peptidyl-tRNAs (with 1 or more amino acids incorporated), which drop off the ribosome during protein synthesis, or as a result of ribosome stalling. Catalyzes the release of premature peptidyl moieties from peptidyl-tRNA molecules trapped in stalled 50S ribosomal subunits, and thus maintains levels of free tRNAs and 50S ribosomes. This Corynebacterium glutamicum (strain ATCC 13032 / DSM 20300 / JCM 1318 / BCRC 11384 / CCUG 27702 / LMG 3730 / NBRC 12168 / NCIMB 10025 / NRRL B-2784 / 534) protein is Peptidyl-tRNA hydrolase 2.